Reading from the N-terminus, the 220-residue chain is Protein-L-isoaspartate O-methyltransferase (220 aa).

The active site involves Ser64.

The protein belongs to the methyltransferase superfamily. L-isoaspartyl/D-aspartyl protein methyltransferase family.

Its subcellular location is the cytoplasm. It carries out the reaction [protein]-L-isoaspartate + S-adenosyl-L-methionine = [protein]-L-isoaspartate alpha-methyl ester + S-adenosyl-L-homocysteine. Catalyzes the methyl esterification of L-isoaspartyl residues in peptides and proteins that result from spontaneous decomposition of normal L-aspartyl and L-asparaginyl residues. It plays a role in the repair and/or degradation of damaged proteins. The protein is Protein-L-isoaspartate O-methyltransferase of Thermococcus onnurineus (strain NA1).